Reading from the N-terminus, the 71-residue chain is Protein CYSTEINE-RICH TRANSMEMBRANE MODULE 6 (71 aa).

Residues 1–12 show a composition bias toward polar residues; that stretch reads MSQYSQNQSSGA. A disordered region spans residues 1–36; it reads MSQYSQNQSSGAYPTPPVSTGPYVAPPPLGYPTNDT. Over residues 14-30 the composition is skewed to pro residues; that stretch reads PTPPVSTGPYVAPPPLG. Residues 48 to 64 traverse the membrane as a helical segment; the sequence is SKGDGFLKGCLAAMCCC.

Belongs to the CYSTM1 family. In terms of assembly, homodimer and heterodimers. Interacts with CYSTM7 and WIH1/CYSTM13. In terms of tissue distribution, mostly expressed in roots, stems, rosette leaves and siliques and, to a lower extent, in flowers and cauline leaves.

Its subcellular location is the cell membrane. It localises to the cytoplasm. Functionally, involved in resistance to abiotic stress. The chain is Protein CYSTEINE-RICH TRANSMEMBRANE MODULE 6 from Arabidopsis thaliana (Mouse-ear cress).